The sequence spans 75 residues: UPF0270 protein PSEEN1465 (75 aa).

The protein belongs to the UPF0270 family.

The protein is UPF0270 protein PSEEN1465 of Pseudomonas entomophila (strain L48).